We begin with the raw amino-acid sequence, 179 residues long: ADP-ribosylation factor-like protein 5A (179 aa).

Gly-2 carries the N-myristoyl glycine lipid modification. GTP is bound by residues 23–30 (GLDNAGKT), 66–70 (DIGGQ), 125–128 (NKQD), and Ala-159.

The protein belongs to the small GTPase superfamily. Arf family.

Its function is as follows. Lacks ADP-ribosylation enhancing activity. This Homo sapiens (Human) protein is ADP-ribosylation factor-like protein 5A (ARL5A).